Reading from the N-terminus, the 472-residue chain is Karilysin (472 aa).

Residues 1–20 form the signal peptide; the sequence is MKRFILLFFLSTIAIFKVYS. The propeptide at 21–34 is activation peptide; it reads QRLYDNGPLTGDNN. The Zn(2+) site is built by H102, D104, H117, H133, and H155. E156 functions as the Proton donor/acceptor in the catalytic mechanism. H159 and H165 together coordinate Zn(2+). Positions 196–386 are cleaved as a propeptide — removed in short form; sequence YGYPFSISGP…AVSCSRTISP (191 aa). Residues 387-472 constitute a propeptide, removed in long form; sequence FTLSPNPATD…QTYTQKLIKK (86 aa).

This sequence belongs to the peptidase M10A family. It depends on Zn(2+) as a cofactor. Post-translationally, processes itself into the mature 18-kDa enzyme (Kly18) through sequential autoproteolytic cleavage at both the N- and C-termini. However, the maturation intermediate Kly38 is found to be more active than Kly18 and the rate for its processing is slow, which raises the question as to whether Kly38 is a physiologically relevant entity.

The protein resides in the secreted. Autoprocessing and proteolytic activity are completely inhibited by EDTA and 1,10-phenanthroline in vitro. Proteolytic activity is 3-fold enhanced by Ca(2+) due to stabilization of the protein structure but inhibited by an excess of Zn(2+). Inhibitory studies of karilysin identified several phage display-selected peptides with apparent inhibition constants (Ki) in the micromolar range, among which is the tetrapeptide SWFP (Ki=10.7 uM). Functionally, metalloprotease able to cleave casein, gelatin, elastin, fibrinogen and fibronectin. Shows exclusive preference for hydrophobic residues, especially Leu, Tyr and Met, at the P1' position of substrates, and for Pro or Ala at P3. Can efficiently cleave the antimicrobial peptide LL-37 which is a component of the immune system, leading to a significant reduction of its bactericidal activity. Is also able to inhibit all pathways of the human complement system. The classical and lectin complement pathways are inhibited because of the efficient degradation of mannose-binding lectin, ficolin-2, ficolin-3, and C4 by karilysin, whereas inhibition of the terminal pathway is caused by cleavage of C5. Thus, karilysin appears to be a major virulence factor of T.forsythia that contributes to evasion of the human immune response and periodontal disease. Seems to act synergistically with gingipains from the periodontal pathogen P.gingivalis present at the same sites of infection. This chain is Karilysin (kly), found in Tannerella forsythia (strain ATCC 43037 / JCM 10827 / CCUG 21028 A / KCTC 5666 / FDC 338) (Bacteroides forsythus).